A 357-amino-acid polypeptide reads, in one-letter code: UDP-3-O-acylglucosamine N-acyltransferase (357 aa).

Histidine 258 (proton acceptor) is an active-site residue.

It belongs to the transferase hexapeptide repeat family. LpxD subfamily. In terms of assembly, homotrimer.

The enzyme catalyses a UDP-3-O-[(3R)-3-hydroxyacyl]-alpha-D-glucosamine + a (3R)-hydroxyacyl-[ACP] = a UDP-2-N,3-O-bis[(3R)-3-hydroxyacyl]-alpha-D-glucosamine + holo-[ACP] + H(+). It functions in the pathway bacterial outer membrane biogenesis; LPS lipid A biosynthesis. Its function is as follows. Catalyzes the N-acylation of UDP-3-O-acylglucosamine using 3-hydroxyacyl-ACP as the acyl donor. Is involved in the biosynthesis of lipid A, a phosphorylated glycolipid that anchors the lipopolysaccharide to the outer membrane of the cell. In Azorhizobium caulinodans (strain ATCC 43989 / DSM 5975 / JCM 20966 / LMG 6465 / NBRC 14845 / NCIMB 13405 / ORS 571), this protein is UDP-3-O-acylglucosamine N-acyltransferase.